Consider the following 1807-residue polypeptide: Atrochrysone carboxylic acid synthase Agnpks1 (1807 aa).

An N-terminal acylcarrier protein transacylase domain (SAT) region spans residues 41–173 (LFRELHNHSK…ITGAQVIRQA (133 aa)). The Ketosynthase family 3 (KS3) domain maps to 411–845 (QSKIAIVGMS…GGNTTILLEE (435 aa)). Catalysis depends on for beta-ketoacyl synthase activity residues C584, H720, and H763. Residues 946–1265 (FTFTGQGASY…SLAALHCAGV (320 aa)) form a malonyl-CoA:ACP transacylase (MAT) domain region. The segment at 1334 to 1653 (TSTVHQIIQE…RILLSRFFSA (320 aa)) is product template (PT) domain. Residues 1338 to 1473 (HQIIQESIDG…ATLIYGDPSE (136 aa)) are N-terminal hotdog fold. The 311-residue stretch at 1338–1648 (HQIIQESIDG…FRRYPRILLS (311 aa)) folds into the PKS/mFAS DH domain. H1370 (proton acceptor; for dehydratase activity) is an active-site residue. The tract at residues 1500–1648 (VANRFNHQMA…FRRYPRILLS (149 aa)) is C-terminal hotdog fold. D1559 functions as the Proton donor; for dehydratase activity in the catalytic mechanism. Positions 1732-1806 (DTTTAKAIQI…DLRSWLEEYY (75 aa)) constitute a Carrier domain. The residue at position 1766 (S1766) is an O-(pantetheine 4'-phosphoryl)serine.

The catalysed reaction is holo-[ACP] + 8 malonyl-CoA + 8 H(+) = atrochrysone carboxyl-[ACP] + 8 CO2 + 8 CoA + 2 H2O. The protein operates within secondary metabolite biosynthesis. Its function is as follows. Non-reducing polyketide synthase; part of the gene cluster that mediates the biosynthesis of agnestins, dihydroxy-xanthone metabolites. The pathway begins with the assembly and cyclization of atrochrysone thioester by the non-reducing polyketide synthase Agnpks1. The atrochrysone carboxyl ACP thioesterase AgnL7 then breaks the thioester bond and releases the atrochrysone carboxylic acid as the first enzyme-free intermediate. The decarboxylase AgnL1 then catalyzes the concerted decarboxylation-elimination required to convert atochrysone carboxylic acid into emodin anthrone, which is further oxidized to emodin by the anthrone oxygenase AgnL2. Emodin then undergoes reduction catalyzed by the oxidoreductase AgnL4 to yield the dihydroquinone tautomer which is the substrate for reduction by the short chain dehydrogenase AgnL6 reduction to produce hydroxyketone, followed by AgnL8 dehydration and likely spontaneous autoxidation to chrysophanol. Baeyer-Villiger oxidation by the oxidase AgnL3 leads to monodictyphenone via cleavage of the C-10/C-10a bond of chrysophanol. Alternative cleavage at the C-4a/C-10 bond of chrysophanol also leads to the formation some cephalone F. Further conversion to agnestins A and B, requires reduction to dihydro-monodictyphenone, oxidation to agnestin C probably via an epoxide, and rearrangement to either agnestin A or agnestin B directly, although agnestin A or agnestin B can also interconvert. Within the cluster, AgnR1 is the only unassigned oxidoreductase present which could be involved in this conversion. However, AgnR1 seems not to be involved in this step, and thus genes involved in the proposed oxidation/reduction may be located elsewhere on the genome. Further agnestin A derivatives are probably formed by spontaneous decarboxylations, dehydrations and methanolysis reactions. The chain is Atrochrysone carboxylic acid synthase Agnpks1 from Paecilomyces divaricatus (Penicillium divaricatum).